We begin with the raw amino-acid sequence, 93 residues long: Pyrimidine/purine nucleoside phosphorylase (93 aa).

It belongs to the nucleoside phosphorylase PpnP family.

It carries out the reaction a purine D-ribonucleoside + phosphate = a purine nucleobase + alpha-D-ribose 1-phosphate. The catalysed reaction is adenosine + phosphate = alpha-D-ribose 1-phosphate + adenine. The enzyme catalyses cytidine + phosphate = cytosine + alpha-D-ribose 1-phosphate. It catalyses the reaction guanosine + phosphate = alpha-D-ribose 1-phosphate + guanine. It carries out the reaction inosine + phosphate = alpha-D-ribose 1-phosphate + hypoxanthine. The catalysed reaction is thymidine + phosphate = 2-deoxy-alpha-D-ribose 1-phosphate + thymine. The enzyme catalyses uridine + phosphate = alpha-D-ribose 1-phosphate + uracil. It catalyses the reaction xanthosine + phosphate = alpha-D-ribose 1-phosphate + xanthine. In terms of biological role, catalyzes the phosphorolysis of diverse nucleosides, yielding D-ribose 1-phosphate and the respective free bases. Can use uridine, adenosine, guanosine, cytidine, thymidine, inosine and xanthosine as substrates. Also catalyzes the reverse reactions. This chain is Pyrimidine/purine nucleoside phosphorylase, found in Photobacterium profundum (strain SS9).